The primary structure comprises 613 residues: Potassium voltage-gated channel subfamily A member 5 (613 aa).

Residues 1 to 108 (MEIALVPLEN…EGDPGLGTVE (108 aa)) form a disordered region. Positions 1–211 (MEIALVPLEN…FYQLGDEAME (211 aa)) are tetramerization domain. The Cytoplasmic portion of the chain corresponds to 1–247 (MEIALVPLEN…LIFEYPESSG (247 aa)). Basic and acidic residues predominate over residues 45–62 (GPKEPAPKGRGAQRDADS). Repeat copies occupy residues 61 to 71 (DSGVRPLPPLP) and 72 to 82 (DPGVRPLPPLP). Residues 61 to 82 (DSGVRPLPPLPDPGVRPLPPLP) form a 2 X 11 AA tandem repeat of D-[SP]-G-V-R-P-L-P-P-L-P region. Residues 66–83 (PLPPLPDPGVRPLPPLPE) show a composition bias toward pro residues. A compositionally biased stretch (basic and acidic residues) spans 84 to 93 (ELPRPRRPPP). Residue lysine 221 forms a Glycyl lysine isopeptide (Lys-Gly) (interchain with G-Cter in SUMO) linkage. Residues 248–269 (SARAIAIVSVLVILISIITFCL) form a helical membrane-spanning segment. Residues 270 to 323 (ETLPEFRDERELLRHPPAPHQPPAPAPGANGSGVMAPPSGPTVAPLLPRTLADP) are Extracellular-facing. A disordered region spans residues 282-304 (LRHPPAPHQPPAPAPGANGSGVM). Residues 285 to 295 (PPAPHQPPAPA) show a composition bias toward pro residues. The chain crosses the membrane as a helical span at residues 324-345 (FFIVETTCVIWFTFELLVRFFA). Cysteine 346 is lipidated: S-palmitoyl cysteine. Over 346–356 (CPSKAGFSRNI) the chain is Cytoplasmic. A helical transmembrane segment spans residues 357–377 (MNIIDVVAIFPYFITLGTELA). At 378-395 (EQQPGGGGGGQNGQQAMS) the chain is on the extracellular side. A helical; Voltage-sensor transmembrane segment spans residues 396-416 (LAILRVIRLVRVFRIFKLSRH). Residues 417–431 (SKGLQILGKTLQASM) lie on the Cytoplasmic side of the membrane. An S4-S5 linker region spans residues 418–431 (KGLQILGKTLQASM). Residues 432–453 (RELGLLIFFLFIGVILFSSAVY) form a helical membrane-spanning segment. Over 454–467 (FAEADNQGTHFSSI) the chain is Extracellular. Positions 468 to 479 (PDAFWWAVVTMT) form an intramembrane region, helical. Positions 480-485 (TVGYGD) match the Selectivity filter motif. Residues 480–487 (TVGYGDMR) lie within the membrane without spanning it. Over 488-494 (PITVGGK) the chain is Extracellular. The helical transmembrane segment at 495-523 (IVGSLCAIAGVLTIALPVPVIVSNFNYFY) threads the bilayer. Residues 524-613 (HRETDHEEPA…CLDTSRETDL (90 aa)) lie on the Cytoplasmic side of the membrane. The segment at 532–559 (PAVLKEEQGTQSQGPGLDRGVQRKVSGS) is disordered. Lysine 536 is covalently cross-linked (Glycyl lysine isopeptide (Lys-Gly) (interchain with G-Cter in SUMO)). Serine 557 is modified (phosphoserine; by PKA). The PDZ-binding motif lies at 611–613 (TDL).

It belongs to the potassium channel family. A (Shaker) (TC 1.A.1.2) subfamily. Kv1.5/KCNA5 sub-subfamily. In terms of assembly, homotetramer and heterotetramer of potassium channel proteins. Interacts with DLG1, which enhances channel currents. Forms a ternary complex with DLG1 and CAV3. Interacts with KCNAB1. Interacts with UBE2I. Interacts with XIRP2; the interaction is required for normal action potential configuration in the heart. Glycosylated. In terms of processing, sumoylated on Lys-221, and Lys-536, preferentially with SUMO3. Sumoylation regulates the voltage sensitivity of the channel. In terms of tissue distribution, pancreatic islets and insulinoma.

The protein localises to the cell membrane. It carries out the reaction K(+)(in) = K(+)(out). With respect to regulation, inhibited by 4-aminopyridine, nicotine, bepridil, correolide, and endothelin-1. Voltage-gated potassium channel that mediates transmembrane potassium transport in excitable membranes. Forms tetrameric potassium-selective channels through which potassium ions pass in accordance with their electrochemical gradient. The channel alternates between opened and closed conformations in response to the voltage difference across the membrane. Can form functional homotetrameric channels and heterotetrameric channels that contain variable proportions of KCNA1, KCNA2, KCNA4, KCNA5, and possibly other family members as well; channel properties depend on the type of alpha subunits that are part of the channel. Channel properties are modulated by cytoplasmic beta subunits that regulate the subcellular location of the alpha subunits and promote rapid inactivation. Homotetrameric channels display rapid activation and slow inactivation. Required for normal electrical conduction including formation of the infranodal ventricular conduction system and normal action potential configuration, as a result of its interaction with XIRP2. May play a role in regulating the secretion of insulin in normal pancreatic islets. Its function is as follows. Exhibits a faster depolarization rate, reduced voltage-dependent recovery from inactivation and an excessive cumulative inactivation. This chain is Potassium voltage-gated channel subfamily A member 5 (KCNA5), found in Homo sapiens (Human).